Consider the following 64-residue polypeptide: MAKNKGVRLVITLECTECRSNSAKRSPGVSRYTTEKNRRNTTERLEIKKFCPHCNKSAIHKEIK.

Belongs to the bacterial ribosomal protein bL33 family.

It localises to the plastid. Its subcellular location is the organellar chromatophore. In Paulinella chromatophora, this protein is Large ribosomal subunit protein bL33c.